The sequence spans 280 residues: C-type lectin domain family 1 member A (280 aa).

A disordered region spans residues 1-44 (MQAKYSSTRDMLDDDGDTTMSLHSQGSATTRHPEPRRTEHRAPS). At 1–52 (MQAKYSSTRDMLDDDGDTTMSLHSQGSATTRHPEPRRTEHRAPSSTWRPVAL) the chain is on the cytoplasmic side. Polar residues predominate over residues 18–30 (TTMSLHSQGSATT). Positions 31 to 42 (RHPEPRRTEHRA) are enriched in basic and acidic residues. The helical; Signal-anchor for type II membrane protein transmembrane segment at 53–73 (TLLTLCLVLLIGLAALGLLFF) threads the bilayer. The Extracellular segment spans residues 74 to 280 (QYYQLSNTGQ…VPPETLGEGD (207 aa)). N-linked (GlcNAc...) asparagine glycans are attached at residues Asn-95 and Asn-169. One can recognise a C-type lectin domain in the interval 144-258 (HGDNCYQFYK…CKELKRCVCE (115 aa)). Disulfide bonds link Cys-165–Cys-257 and Cys-236–Cys-249.

As to expression, expressed preferentially in dendritic cells.

It is found in the membrane. The chain is C-type lectin domain family 1 member A (CLEC1A) from Homo sapiens (Human).